Consider the following 563-residue polypeptide: Autotransporter BimA (563 aa).

The interval 1-20 (MKYRRLSLAHARQDSGQAAS) is disordered. Residues 1–48 (MKYRRLSLAHARQDSGQAASNARSRRFARLLCSSIAPLALGFSADAFA) form the signal peptide. The tract at residues 61–472 (APNDAHGNLL…NLAISNSNAY (412 aa)) is surface exposed passenger domain. The WH2 domain occupies 65-82 (AHGNLLDEIRRGVPLRHV). A central and acidic domains region spans residues 96 to 130 (TLADAMRRVIDSRRTAFDSPPATPASPSPSWSDDE). Residues 109 to 350 (RTAFDSPPAT…PARPGGGQFT (242 aa)) are disordered. Composition is skewed to low complexity over residues 138 to 150 (ATRP…SAAR), 162 to 197 (PASA…STPR), and 211 to 227 (SPAA…AHSR). Composition is skewed to polar residues over residues 228 to 238 (GSTQPPSNLST) and 269 to 281 (SRGS…NLST). Residues 473-509 (TNQRIGDLQQSITETARDAYSGVAAATALTMIPDVDR) form an outer membrane translocation of the passenger domain region. Beta stranded transmembrane passes span 510-519 (DKMLSIGVGG), 525-536 (HRAVALGGTARI), 543-549 (RAGVAMS), and 553-563 (NTVGVGMSWQW). Residues 510 to 563 (DKMLSIGVGGAVYKGHRAVALGGTARIGENLKVRAGVAMSAGGNTVGVGMSWQW) are translocator domain.

Belongs to the autotransporter-2 (AT-2) (TC 1.B.40) family. In terms of assembly, homotrimer. Interacts with host G-actin; the interaction is direct. Interacts (via central and acidic domains) with host ACTR2/ARP2 and ACTR3/ARP3.

The protein resides in the cell outer membrane. The protein localises to the cell surface. During host cell infection, required for actin-based intracellular motility. Mediates actin tail formation at one pole of the bacteria surface by recruiting host Arp2/3 (ACTR3/ARP3-ACTR2/ARP2) which leads to actin polymerization which provides the propulsive force for intracellular movement and intercellular dissemination of the bacterium. The chain is Autotransporter BimA from Burkholderia thailandensis (strain ATCC 700388 / DSM 13276 / CCUG 48851 / CIP 106301 / E264).